A 158-amino-acid chain; its full sequence is uncharacterized protein (158 aa).

This is an uncharacterized protein from Aedes vexans (Inland floodwater mosquito).